Consider the following 773-residue polypeptide: C-Maf-inducing protein (773 aa).

The segment at 1-28 (MDVTSSSGGGDPRQIEETKPLLGSDVSG) is disordered. The PH domain maps to 54–163 (LLQEGDIQVC…HSLQWKKKIY (110 aa)). Residues S349, S377, S382, and S660 each carry the phosphoserine modification. 4 LRR repeats span residues 663–686 (NLENLSLAFTNVTSACAEHLIKLP), 687–707 (SLKQLNLWSTQFGDAGLRLLS), 712–732 (MLQVLNLCETPVTDAGLLALS), and 736–756 (SLCSLNMNSTKLSADTYEDLK).

As to quaternary structure, interacts with FLNA.

The protein localises to the nucleus. The protein resides in the cytoplasm. Its function is as follows. Plays a role in T-cell signaling pathway. This Mus musculus (Mouse) protein is C-Maf-inducing protein (Cmip).